The sequence spans 314 residues: NAC domain-containing protein 10 (314 aa).

Over residues 18-39 (VSNTDHPSVQLKDQSQSCVTSR) the composition is skewed to polar residues. 2 disordered regions span residues 18 to 48 (VSNT…SAET) and 150 to 182 (YTTG…PVLS). The region spanning 77-236 (LPAGVKFDPS…EPVLSKVFYQ (160 aa)) is the NAC domain. A compositionally biased stretch (basic and acidic residues) spans 160–171 (VSTDEEGHETRW). A DNA-binding region spans residues 187–242 (TGFKKILVLYTNYGRQKKPEKTNWVMHQYHLGSSEDEKDGEPVLSKVFYQTQPRQC).

In terms of tissue distribution, expressed in protoxylem and elongating interfascicular fiber cells of elongating internodes, developing metaxylem cells and interfascicular fibers of non-elongating internodes and developing secondary xylem of roots.

It localises to the nucleus. In terms of biological role, transcriptional activator that plays a regulatory role in the development of secondary cell wall fibers. Is a direct target of SND1. In Arabidopsis thaliana (Mouse-ear cress), this protein is NAC domain-containing protein 10.